Here is a 196-residue protein sequence, read N- to C-terminus: Peptidyl-tRNA hydrolase (196 aa).

Residue tyrosine 18 coordinates tRNA. The Proton acceptor role is filled by histidine 23. Residues phenylalanine 69, asparagine 71, and asparagine 117 each coordinate tRNA.

The protein belongs to the PTH family. Monomer.

It localises to the cytoplasm. The catalysed reaction is an N-acyl-L-alpha-aminoacyl-tRNA + H2O = an N-acyl-L-amino acid + a tRNA + H(+). Functionally, hydrolyzes ribosome-free peptidyl-tRNAs (with 1 or more amino acids incorporated), which drop off the ribosome during protein synthesis, or as a result of ribosome stalling. Catalyzes the release of premature peptidyl moieties from peptidyl-tRNA molecules trapped in stalled 50S ribosomal subunits, and thus maintains levels of free tRNAs and 50S ribosomes. This Vibrio vulnificus (strain CMCP6) protein is Peptidyl-tRNA hydrolase.